The primary structure comprises 517 residues: Aldehyde dehydrogenase X, mitochondrial (517 aa).

A mitochondrion-targeting transit peptide spans Met1 to Ala17. Lys51 carries the post-translational modification N6-acetyllysine. Residue Lys52 is modified to N6-acetyllysine; alternate. An N6-succinyllysine; alternate modification is found at Lys52. Lys81 bears the N6-succinyllysine mark. Gly262 to Gly267 contributes to the NAD(+) binding site. Glu285 acts as the Proton acceptor in catalysis. Cys319 serves as the catalytic Nucleophile. Residues Lys364, Lys383, Lys399, Lys414, and Lys426 each carry the N6-acetyllysine; alternate modification. 5 positions are modified to N6-succinyllysine; alternate: Lys364, Lys383, Lys399, Lys414, and Lys426. An N6-acetyllysine modification is found at Lys429.

The protein belongs to the aldehyde dehydrogenase family. In terms of assembly, homotetramer.

It localises to the mitochondrion matrix. It carries out the reaction an aldehyde + NAD(+) + H2O = a carboxylate + NADH + 2 H(+). The protein operates within alcohol metabolism; ethanol degradation; acetate from ethanol: step 2/2. ALDHs play a major role in the detoxification of alcohol-derived acetaldehyde. They are involved in the metabolism of corticosteroids, biogenic amines, neurotransmitters, and lipid peroxidation. In Pongo abelii (Sumatran orangutan), this protein is Aldehyde dehydrogenase X, mitochondrial (ALDH1B1).